Consider the following 305-residue polypeptide: Protoheme IX farnesyltransferase (305 aa).

Helical transmembrane passes span 29–49, 55–75, 101–121, 123–143, 151–171, 177–197, 219–241, 246–268, and 283–303; these read LIVFCAAIGMLLAVPGAPGLA, LWATLGIWLVASAAAAFNCLI, ALIFSAVLCSAGMAVLHEAVN, LTAWLTLGTFVGYAVIYTVVL, IVIGGISGAMPPLLGWAAMTG, GLILCLIIFLWTPPHFWALAL, FTRLQILLYTFVLLAGTLLPFVQ, WLYLAAAFVLGLRFIHYAWRLWR, and IWHLSLLFAALLVDHYTQDLL.

It belongs to the UbiA prenyltransferase family. Protoheme IX farnesyltransferase subfamily.

Its subcellular location is the cell inner membrane. The enzyme catalyses heme b + (2E,6E)-farnesyl diphosphate + H2O = Fe(II)-heme o + diphosphate. It functions in the pathway porphyrin-containing compound metabolism; heme O biosynthesis; heme O from protoheme: step 1/1. Its function is as follows. Converts heme B (protoheme IX) to heme O by substitution of the vinyl group on carbon 2 of heme B porphyrin ring with a hydroxyethyl farnesyl side group. This chain is Protoheme IX farnesyltransferase, found in Leptothrix cholodnii (strain ATCC 51168 / LMG 8142 / SP-6) (Leptothrix discophora (strain SP-6)).